Reading from the N-terminus, the 319-residue chain is Phosphoribosylformylglycinamidine cyclo-ligase (319 aa).

Belongs to the AIR synthase family.

Its subcellular location is the cytoplasm. It catalyses the reaction 2-formamido-N(1)-(5-O-phospho-beta-D-ribosyl)acetamidine + ATP = 5-amino-1-(5-phospho-beta-D-ribosyl)imidazole + ADP + phosphate + H(+). The protein operates within purine metabolism; IMP biosynthesis via de novo pathway; 5-amino-1-(5-phospho-D-ribosyl)imidazole from N(2)-formyl-N(1)-(5-phospho-D-ribosyl)glycinamide: step 2/2. This is Phosphoribosylformylglycinamidine cyclo-ligase from Sulfurisphaera tokodaii (strain DSM 16993 / JCM 10545 / NBRC 100140 / 7) (Sulfolobus tokodaii).